A 70-amino-acid polypeptide reads, in one-letter code: ATP synthase subunit c (70 aa).

2 helical membrane-spanning segments follow: residues 1-21 and 47-67; these read MNFL…SYGN and FIGV…SFLI.

The protein belongs to the ATPase C chain family. F-type ATPases have 2 components, F(1) - the catalytic core - and F(0) - the membrane proton channel. F(1) has five subunits: alpha(3), beta(3), gamma(1), delta(1), epsilon(1). F(0) has three main subunits: a(1), b(2) and c(10-14). The alpha and beta chains form an alternating ring which encloses part of the gamma chain. F(1) is attached to F(0) by a central stalk formed by the gamma and epsilon chains, while a peripheral stalk is formed by the delta and b chains.

The protein resides in the cell membrane. F(1)F(0) ATP synthase produces ATP from ADP in the presence of a proton or sodium gradient. F-type ATPases consist of two structural domains, F(1) containing the extramembraneous catalytic core and F(0) containing the membrane proton channel, linked together by a central stalk and a peripheral stalk. During catalysis, ATP synthesis in the catalytic domain of F(1) is coupled via a rotary mechanism of the central stalk subunits to proton translocation. Functionally, key component of the F(0) channel; it plays a direct role in translocation across the membrane. A homomeric c-ring of between 10-14 subunits forms the central stalk rotor element with the F(1) delta and epsilon subunits. This chain is ATP synthase subunit c, found in Latilactobacillus sakei subsp. sakei (strain 23K) (Lactobacillus sakei subsp. sakei).